The chain runs to 802 residues: Xylanase/beta-glucanase (802 aa).

An N-terminal signal peptide occupies residues 1-31; that stretch reads MKKSIFKRYAAAVGLMASVLMFTAVPTTSNA. Positions 32–239 constitute a GH11 domain; that stretch reads ADDQKTGKVG…SNGSANVKSI (208 aa). The Nucleophile role is filled by Glu-124. Glu-226 acts as the Proton donor in catalysis. The b stretch occupies residues 245–523; the sequence is IDIPDPEPIK…SYLEGHDPSK (279 aa). The CBM-cenC domain maps to 258-404; that stretch reads NGYYLKENFE…YMDGAYAGVK (147 aa). Disordered stretches follow at residues 414 to 436 and 533 to 564; these read SQSV…PSVT and TTTT…YRDL. Composition is skewed to low complexity over residues 419 to 436 and 533 to 553; these read PPVT…PSVT and TTTT…TTTT. One can recognise a Dockerin domain in the interval 434-513; sequence SVTKWGDANC…LIRAISELPE (80 aa). A linker region spans residues 524–555; it reads TTTTTTRITTTTTTTTTTTTSKTTTTTTTTSP. The GH16 domain maps to 556 to 792; sequence AMHGGYRDLG…WVTYNKNGVQ (237 aa). The active-site Nucleophile is the Glu-684.

In the N-terminal section; belongs to the glycosyl hydrolase 11 (cellulase G) family. The protein in the C-terminal section; belongs to the glycosyl hydrolase 16 family.

The enzyme catalyses Endohydrolysis of (1-&gt;4)-beta-D-xylosidic linkages in xylans.. The catalysed reaction is Hydrolysis of (1-&gt;4)-beta-D-glucosidic linkages in beta-D-glucans containing (1-&gt;3)- and (1-&gt;4)-bonds.. The protein operates within glycan degradation; xylan degradation. Contains two catalytic domains with xylanase and endo-beta-1,3-1,4 glucanase activities. This is Xylanase/beta-glucanase (xynD) from Ruminococcus flavefaciens.